The following is a 488-amino-acid chain: Cis-aconitate decarboxylase (488 aa).

Belongs to the PrpD family. As to quaternary structure, homodimer. Expressed in LPS-tolerized macrophages (at protein level). Expressed in the luminal epithelial cells of pregnant uterus. Expressed in microglia and macrophage cells.

The protein resides in the mitochondrion. The enzyme catalyses cis-aconitate + H(+) = itaconate + CO2. Cis-aconitate decarboxylase that catalyzes production of itaconate and is involved in the inhibition of the inflammatory response. Acts as a negative regulator of the Toll-like receptors (TLRs)-mediated inflammatory innate response by stimulating the tumor necrosis factor alpha-induced protein TNFAIP3 expression via reactive oxygen species (ROS) in LPS-tolerized macrophages. Involved in antimicrobial response of innate immune cells; ACOD1-mediated itaconic acid production contributes to the antimicrobial activity of macrophages by generating itaconate, leading to alkylation of proteins, such as TFEB. Involved in antiviral response following infection by flavivirus in neurons: ACOD1-mediated itaconate production inhibits the activity of succinate dehydrogenase, generating a metabolic state in neurons that suppresses replication of viral genomes. Plays a role in the embryo implantation. The chain is Cis-aconitate decarboxylase from Mus musculus (Mouse).